The following is a 562-amino-acid chain: MRSDMIKKGDHQAPARSLLHATGALKSPTDMNKPFVAICNSYIDIVPGHVHLRELADIAKEAIREAGAIPFEFNTIGVDDGIAMGHIGMRYSLPSREIIADAAETVINAHWFDGVFYIPNCDKITPGMILAAMRTNVPAIFCSGGPMKAGLSAHGKALTLSSMFEAVGAFKEGSISKEEFLDMEQNACPTCGSCAGMFTANSMNCLMEVLGLALPYNGTALAVSDQRREMIRQAAFKLVENIKNDLKPRDIVTREAIDDAFALDMAMGGSTNTVLHTLAIANEAGIDYDLERINAIAKRTPYLSKIAPSSSYSMHDVHEAGGVPAIINELMKKDGTLHPDRITVTGKTLRENNEGKEIKNFDVIHSLDAPYDAQGGLSILFGNIAPKGAVIKVGGVDPSIKTFTGKAICFNSHDEAVEAIDNRTVRAGHVVVIRYEGPKGGPGMPEMLAPTSSIVGRGLGKDVALITDGRFSGATRGIAVGHISPEAASGGPIALIEDGDEITIDLTNRTLKVNQPEDVLARRRESLTPFKAKVKTGYLARYTALVTSANTGGVMQVPENLI.

Residue aspartate 80 participates in Mg(2+) binding. Position 121 (cysteine 121) interacts with [2Fe-2S] cluster. The Mg(2+) site is built by aspartate 122 and lysine 123. N6-carboxylysine is present on lysine 123. [2Fe-2S] cluster is bound at residue cysteine 194. Position 446 (glutamate 446) interacts with Mg(2+). Serine 472 (proton acceptor) is an active-site residue.

The protein belongs to the IlvD/Edd family. As to quaternary structure, homodimer. The cofactor is [2Fe-2S] cluster. Mg(2+) serves as cofactor.

It catalyses the reaction (2R)-2,3-dihydroxy-3-methylbutanoate = 3-methyl-2-oxobutanoate + H2O. It carries out the reaction (2R,3R)-2,3-dihydroxy-3-methylpentanoate = (S)-3-methyl-2-oxopentanoate + H2O. Its pathway is amino-acid biosynthesis; L-isoleucine biosynthesis; L-isoleucine from 2-oxobutanoate: step 3/4. It functions in the pathway amino-acid biosynthesis; L-valine biosynthesis; L-valine from pyruvate: step 3/4. In terms of biological role, functions in the biosynthesis of branched-chain amino acids. Catalyzes the dehydration of (2R,3R)-2,3-dihydroxy-3-methylpentanoate (2,3-dihydroxy-3-methylvalerate) into 2-oxo-3-methylpentanoate (2-oxo-3-methylvalerate) and of (2R)-2,3-dihydroxy-3-methylbutanoate (2,3-dihydroxyisovalerate) into 2-oxo-3-methylbutanoate (2-oxoisovalerate), the penultimate precursor to L-isoleucine and L-valine, respectively. The sequence is that of Dihydroxy-acid dehydratase from Staphylococcus aureus (strain MRSA252).